We begin with the raw amino-acid sequence, 161 residues long: Assembly protein P7 (161 aa).

In terms of assembly, homodimer. Part of the packaging complex composed of RDRP, P4 and P7. Interacts with RDRP.

It is found in the virion. Assembly protein part of the packaging complex that packages the viral RNA segments, replicate them into a double-stranded form and transcribe them. Required for efficient procapsid assembly. Necessary for stable packaging. May stabilize the RNA-dependent RNA polymerase (RdRP) in its position at the three-fold axis on the inner side of empty-unexpanded procapsids. Could play a role in viral RNA recognition. Seems to be involved in the regulation of plus strand synthesis (transcription) as a fidelity factor. This Pseudomonas phage phi6 (Bacteriophage phi-6) protein is Assembly protein P7 (P7).